The chain runs to 356 residues: Putative mitogen-activated protein kinase 14C (356 aa).

Positions 20-305 constitute a Protein kinase domain; the sequence is YEFVRFLGGG…AAEAMLHPYL (286 aa). Residues 26–34 and K49 each bind ATP; that span reads LGGGSFGQV. D147 functions as the Proton acceptor in the catalytic mechanism. T177 is subject to Phosphothreonine.

The protein belongs to the protein kinase superfamily. CMGC Ser/Thr protein kinase family. MAP kinase subfamily. It depends on Mg(2+) as a cofactor. Post-translationally, the phosphorylation on Thr-177 activates the enzyme. A conserved Tyr, which must also be phosphorylated to activate the enzyme in closely related sequences, is replaced by His-179 in this sequence.

The enzyme catalyses L-seryl-[protein] + ATP = O-phospho-L-seryl-[protein] + ADP + H(+). The catalysed reaction is L-threonyl-[protein] + ATP = O-phospho-L-threonyl-[protein] + ADP + H(+). In terms of biological role, kinase involved in a signal transduction pathway. This is Putative mitogen-activated protein kinase 14C (p38c) from Drosophila melanogaster (Fruit fly).